A 144-amino-acid polypeptide reads, in one-letter code: Large ribosomal subunit protein uL15 (144 aa).

Positions 1 to 57 (MRLNTLSPAAGSKHAPKRVGRGIGSGLGKTGGRGHKGQKSRSGGKVRPGFEGGQMPL) are disordered. Over residues 21-31 (RGIGSGLGKTG) the composition is skewed to gly residues. Basic residues predominate over residues 32 to 44 (GRGHKGQKSRSGG).

The protein belongs to the universal ribosomal protein uL15 family. Part of the 50S ribosomal subunit.

Binds to the 23S rRNA. This chain is Large ribosomal subunit protein uL15, found in Vibrio vulnificus (strain CMCP6).